Reading from the N-terminus, the 425-residue chain is Serine--tRNA ligase (425 aa).

Residue 230 to 232 coordinates L-serine; the sequence is TAE. Residue 261 to 263 participates in ATP binding; it reads RQE. E284 lines the L-serine pocket. 348-351 is an ATP binding site; the sequence is EISS. S384 serves as a coordination point for L-serine.

Belongs to the class-II aminoacyl-tRNA synthetase family. Type-1 seryl-tRNA synthetase subfamily. Homodimer. The tRNA molecule binds across the dimer.

It is found in the cytoplasm. The catalysed reaction is tRNA(Ser) + L-serine + ATP = L-seryl-tRNA(Ser) + AMP + diphosphate + H(+). It carries out the reaction tRNA(Sec) + L-serine + ATP = L-seryl-tRNA(Sec) + AMP + diphosphate + H(+). Its pathway is aminoacyl-tRNA biosynthesis; selenocysteinyl-tRNA(Sec) biosynthesis; L-seryl-tRNA(Sec) from L-serine and tRNA(Sec): step 1/1. In terms of biological role, catalyzes the attachment of serine to tRNA(Ser). Is also able to aminoacylate tRNA(Sec) with serine, to form the misacylated tRNA L-seryl-tRNA(Sec), which will be further converted into selenocysteinyl-tRNA(Sec). In Caldanaerobacter subterraneus subsp. tengcongensis (strain DSM 15242 / JCM 11007 / NBRC 100824 / MB4) (Thermoanaerobacter tengcongensis), this protein is Serine--tRNA ligase.